Consider the following 196-residue polypeptide: Fucoxanthin-chlorophyll a-c binding protein A, chloroplastic (196 aa).

Residues 1–31 (MKFAVFASLLASRAAFAPAQQSARTSVATNM) constitute a chloroplast transit peptide. 3 helical membrane passes run 73–94 (ICML…PGDI), 114–134 (VPGA…IAVM), and 174–196 (GRAA…SILP).

Belongs to the fucoxanthin chlorophyll protein family. The LHC complex of chromophytic algae is composed of fucoxanthin, chlorophyll A and C bound non-covalently by fucoxanthin chlorophyll proteins (FCPs). The ratio of the pigments in LHC; fucoxanthin: chlorophyll C: chlorophyll A; (0.6-1): (0.1-0.3): (1).

It localises to the plastid. Its subcellular location is the chloroplast thylakoid membrane. The light-harvesting complex (LHC) functions as a light receptor, it captures and delivers excitation energy to photosystems with which it is closely associated. Energy is transferred from the carotenoid and chlorophyll C (or B) to chlorophyll A and the photosynthetic reaction centers where it is used to synthesize ATP and reducing power. The polypeptide is Fucoxanthin-chlorophyll a-c binding protein A, chloroplastic (FCPA) (Phaeodactylum tricornutum (Diatom)).